The following is a 473-amino-acid chain: RuvB-like helicase 2 (473 aa).

76-83 lines the ATP pocket; sequence GPPSTGKT.

It belongs to the RuvB family. May form heterododecamers with RVB1. Component of the SWR1 chromatin remodeling complex, the INO80 chromatin remodeling complex, and of the R2TP complex.

It is found in the nucleus. It catalyses the reaction ATP + H2O = ADP + phosphate + H(+). DNA helicase which participates in several chromatin remodeling complexes, including the SWR1 and the INO80 complexes. The SWR1 complex mediates the ATP-dependent exchange of histone H2A for the H2A variant HZT1 leading to transcriptional regulation of selected genes by chromatin remodeling. The INO80 complex remodels chromatin by shifting nucleosomes and is involved in DNA repair. Also involved in pre-rRNA processing. The polypeptide is RuvB-like helicase 2 (RVB2) (Gibberella zeae (strain ATCC MYA-4620 / CBS 123657 / FGSC 9075 / NRRL 31084 / PH-1) (Wheat head blight fungus)).